A 231-amino-acid polypeptide reads, in one-letter code: Enolase-phosphatase E1 (231 aa).

The protein belongs to the HAD-like hydrolase superfamily. MasA/MtnC family. As to quaternary structure, monomer. Requires Mg(2+) as cofactor.

It catalyses the reaction 5-methylsulfanyl-2,3-dioxopentyl phosphate + H2O = 1,2-dihydroxy-5-(methylsulfanyl)pent-1-en-3-one + phosphate. It functions in the pathway amino-acid biosynthesis; L-methionine biosynthesis via salvage pathway; L-methionine from S-methyl-5-thio-alpha-D-ribose 1-phosphate: step 3/6. The protein operates within amino-acid biosynthesis; L-methionine biosynthesis via salvage pathway; L-methionine from S-methyl-5-thio-alpha-D-ribose 1-phosphate: step 4/6. Its function is as follows. Bifunctional enzyme that catalyzes the enolization of 2,3-diketo-5-methylthiopentyl-1-phosphate (DK-MTP-1-P) into the intermediate 2-hydroxy-3-keto-5-methylthiopentenyl-1-phosphate (HK-MTPenyl-1-P), which is then dephosphorylated to form the acireductone 1,2-dihydroxy-3-keto-5-methylthiopentene (DHK-MTPene). This Stenotrophomonas maltophilia (strain K279a) protein is Enolase-phosphatase E1.